The primary structure comprises 72 residues: Translation initiation factor IF-1 (72 aa).

The S1-like domain occupies 1–72; sequence MAKEKDTIRT…PTRGRIVYRK (72 aa).

The protein belongs to the IF-1 family. In terms of assembly, component of the 30S ribosomal translation pre-initiation complex which assembles on the 30S ribosome in the order IF-2 and IF-3, IF-1 and N-formylmethionyl-tRNA(fMet); mRNA recruitment can occur at any time during PIC assembly.

The protein localises to the cytoplasm. Functionally, one of the essential components for the initiation of protein synthesis. Stabilizes the binding of IF-2 and IF-3 on the 30S subunit to which N-formylmethionyl-tRNA(fMet) subsequently binds. Helps modulate mRNA selection, yielding the 30S pre-initiation complex (PIC). Upon addition of the 50S ribosomal subunit IF-1, IF-2 and IF-3 are released leaving the mature 70S translation initiation complex. The chain is Translation initiation factor IF-1 from Thermus thermophilus (strain ATCC BAA-163 / DSM 7039 / HB27).